Reading from the N-terminus, the 264-residue chain is Thiazole synthase (264 aa).

The Schiff-base intermediate with DXP role is filled by Lys-106. Residues Gly-167, 193-194 (AG), and 215-216 (NT) contribute to the 1-deoxy-D-xylulose 5-phosphate site.

Belongs to the ThiG family. Homotetramer. Forms heterodimers with either ThiH or ThiS.

It is found in the cytoplasm. It carries out the reaction [ThiS sulfur-carrier protein]-C-terminal-Gly-aminoethanethioate + 2-iminoacetate + 1-deoxy-D-xylulose 5-phosphate = [ThiS sulfur-carrier protein]-C-terminal Gly-Gly + 2-[(2R,5Z)-2-carboxy-4-methylthiazol-5(2H)-ylidene]ethyl phosphate + 2 H2O + H(+). Its pathway is cofactor biosynthesis; thiamine diphosphate biosynthesis. Its function is as follows. Catalyzes the rearrangement of 1-deoxy-D-xylulose 5-phosphate (DXP) to produce the thiazole phosphate moiety of thiamine. Sulfur is provided by the thiocarboxylate moiety of the carrier protein ThiS. In vitro, sulfur can be provided by H(2)S. This is Thiazole synthase from Xanthomonas axonopodis pv. citri (strain 306).